The primary structure comprises 475 residues: Aspartyl/glutamyl-tRNA(Asn/Gln) amidotransferase subunit B (475 aa).

The protein belongs to the GatB/GatE family. GatB subfamily. As to quaternary structure, heterotrimer of A, B and C subunits.

It carries out the reaction L-glutamyl-tRNA(Gln) + L-glutamine + ATP + H2O = L-glutaminyl-tRNA(Gln) + L-glutamate + ADP + phosphate + H(+). It catalyses the reaction L-aspartyl-tRNA(Asn) + L-glutamine + ATP + H2O = L-asparaginyl-tRNA(Asn) + L-glutamate + ADP + phosphate + 2 H(+). In terms of biological role, allows the formation of correctly charged Asn-tRNA(Asn) or Gln-tRNA(Gln) through the transamidation of misacylated Asp-tRNA(Asn) or Glu-tRNA(Gln) in organisms which lack either or both of asparaginyl-tRNA or glutaminyl-tRNA synthetases. The reaction takes place in the presence of glutamine and ATP through an activated phospho-Asp-tRNA(Asn) or phospho-Glu-tRNA(Gln). The sequence is that of Aspartyl/glutamyl-tRNA(Asn/Gln) amidotransferase subunit B from Caldanaerobacter subterraneus subsp. tengcongensis (strain DSM 15242 / JCM 11007 / NBRC 100824 / MB4) (Thermoanaerobacter tengcongensis).